We begin with the raw amino-acid sequence, 527 residues long: MKLLAVRRLLRIQRVVIRYQLDELLLELPLPFWLRALSWLLPWRWLPRRPLALSRGARLRLALEDLGPIFIKFGQLLSTRRDLLPPDIADELARLQDQVPPFPEDQAIALIERQLGAPVSQLFARFDSQPLASASVAQVHAAQLKSGEEVVVKVVRPGLKPVIRQDLAWLFLLARIAERASADARRLRPVEVVSDYEKTIFDELDLLREAANASQLRRNFEGSPLLYVPQVYWDLCRHQVLVMERIYGVPVTDLATLADQRTDMKLLAERGVEIFFTQVFRDSFFHADMHPGNIFVSTRTPWSPQYIAIDCGIIGSLTDEDQDYLARNLIAFFKRDYRKVAQLHIDSGWVPADTKVNEFEAAIRTVCEPIFEKPLKDISFGQLLLRLFQTARRFNMEVQPQLVLLQKTLLNIEGLGRQLYPDLDLWSTAQPFLERWMRERVSPLHLLRNLQQQAEQVPHLSQIARDALERLQRPEPPRESDARDQWPLRLLGAALIAAGAVQGLAPLLATWPAWLMVGGGLYLVLRR.

The chain crosses the membrane as a helical span at residues 23 to 43 (ELLLELPLPFWLRALSWLLPW). Positions 125–488 (RFDSQPLASA…ESDARDQWPL (364 aa)) constitute a Protein kinase domain. Residues 131-139 (LASASVAQV) and Lys-153 contribute to the ATP site. Asp-288 serves as the catalytic Proton acceptor. Residues 504-524 (LAPLLATWPAWLMVGGGLYLV) form a helical membrane-spanning segment.

This sequence belongs to the ABC1 family. UbiB subfamily.

The protein localises to the cell inner membrane. It participates in cofactor biosynthesis; ubiquinone biosynthesis [regulation]. Functionally, is probably a protein kinase regulator of UbiI activity which is involved in aerobic coenzyme Q (ubiquinone) biosynthesis. In Ectopseudomonas mendocina (strain ymp) (Pseudomonas mendocina), this protein is Probable protein kinase UbiB.